A 259-amino-acid chain; its full sequence is Dihydroorotate dehydrogenase B (NAD(+)), electron transfer subunit (259 aa).

An FAD-binding FR-type domain is found at 2 to 102 (MQKQNMIVVN…LGPLGHGFPL (101 aa)). FAD-binding positions include 53–56 (RPIS), 70–72 (LYR), and 77–78 (GT). [2Fe-2S] cluster-binding residues include cysteine 221, cysteine 226, cysteine 229, and cysteine 246.

This sequence belongs to the PyrK family. As to quaternary structure, heterotetramer of 2 PyrK and 2 PyrD type B subunits. [2Fe-2S] cluster serves as cofactor. Requires FAD as cofactor.

It functions in the pathway pyrimidine metabolism; UMP biosynthesis via de novo pathway; orotate from (S)-dihydroorotate (NAD(+) route): step 1/1. In terms of biological role, responsible for channeling the electrons from the oxidation of dihydroorotate from the FMN redox center in the PyrD type B subunit to the ultimate electron acceptor NAD(+). This chain is Dihydroorotate dehydrogenase B (NAD(+)), electron transfer subunit, found in Bacillus cereus (strain B4264).